Reading from the N-terminus, the 201-residue chain is Recombination protein RecR (201 aa).

The C4-type zinc finger occupies 60–75 (CRRCGNVDVCDPCTIC). The Toprim domain maps to 83 to 178 (RTLVVVADVG…RVTRLAQGVP (96 aa)).

The protein belongs to the RecR family.

Its function is as follows. May play a role in DNA repair. It seems to be involved in an RecBC-independent recombinational process of DNA repair. It may act with RecF and RecO. The sequence is that of Recombination protein RecR from Xanthobacter autotrophicus (strain ATCC BAA-1158 / Py2).